The following is a 460-amino-acid chain: ATP synthase subunit beta (460 aa).

150–157 (GGAGVGKT) lines the ATP pocket.

It belongs to the ATPase alpha/beta chains family. In terms of assembly, F-type ATPases have 2 components, CF(1) - the catalytic core - and CF(0) - the membrane proton channel. CF(1) has five subunits: alpha(3), beta(3), gamma(1), delta(1), epsilon(1). CF(0) has three main subunits: a(1), b(2) and c(9-12). The alpha and beta chains form an alternating ring which encloses part of the gamma chain. CF(1) is attached to CF(0) by a central stalk formed by the gamma and epsilon chains, while a peripheral stalk is formed by the delta and b chains.

The protein resides in the cell inner membrane. The catalysed reaction is ATP + H2O + 4 H(+)(in) = ADP + phosphate + 5 H(+)(out). Produces ATP from ADP in the presence of a proton gradient across the membrane. The catalytic sites are hosted primarily by the beta subunits. The protein is ATP synthase subunit beta of Erwinia tasmaniensis (strain DSM 17950 / CFBP 7177 / CIP 109463 / NCPPB 4357 / Et1/99).